Here is a 496-residue protein sequence, read N- to C-terminus: Glutamate--tRNA ligase (496 aa).

Residues 10 to 20 (PSPTGPLHIGG) carry the 'HIGH' region motif. Positions 251 to 255 (KMSKR) match the 'KMSKS' region motif. Lysine 254 provides a ligand contact to ATP.

It belongs to the class-I aminoacyl-tRNA synthetase family. Glutamate--tRNA ligase type 1 subfamily. Monomer.

The protein resides in the cytoplasm. It carries out the reaction tRNA(Glu) + L-glutamate + ATP = L-glutamyl-tRNA(Glu) + AMP + diphosphate. Functionally, catalyzes the attachment of glutamate to tRNA(Glu) in a two-step reaction: glutamate is first activated by ATP to form Glu-AMP and then transferred to the acceptor end of tRNA(Glu). In Heliobacterium modesticaldum (strain ATCC 51547 / Ice1), this protein is Glutamate--tRNA ligase.